Consider the following 244-residue polypeptide: MKIDVLTLFPDMFTGVFGSSILKQASDKGIVSFQTVDFREYAANKHRKVDDYPYGGGAGMVLSPQPIFDAVSALTKNGKKKPRIIMLCPQGEQHSQQKAAELAKEEHLIFLCGHYEGFDERVRHLVTDELSIGDYVLTGGELAAMVIADSVVRLLPGVLGNDESAVTDSYSTGLLEHPHYTRPADFRGMKVPDVLLSGHHAKIEEWRMEQSLRRTLERRPDLLKGYEPTAKEADILKRLMDKQE.

S-adenosyl-L-methionine is bound by residues G113 and I132–L137.

The protein belongs to the RNA methyltransferase TrmD family. In terms of assembly, homodimer.

It is found in the cytoplasm. It catalyses the reaction guanosine(37) in tRNA + S-adenosyl-L-methionine = N(1)-methylguanosine(37) in tRNA + S-adenosyl-L-homocysteine + H(+). In terms of biological role, specifically methylates guanosine-37 in various tRNAs. The chain is tRNA (guanine-N(1)-)-methyltransferase from Shouchella clausii (strain KSM-K16) (Alkalihalobacillus clausii).